We begin with the raw amino-acid sequence, 356 residues long: Glutamine synthetase PR-1 (356 aa).

Residues 19–99 (VIAEYIWIGG…VICDAYTPAG (81 aa)) form the GS beta-grasp domain. Positions 41–64 (PGPVKNPSELPKWNYDGSSTGQAP) are disordered. Positions 106–356 (KRHNAAKIFS…IADTTILWKP (251 aa)) constitute a GS catalytic domain.

The protein belongs to the glutamine synthetase family. Homooctamer. Roots.

Its subcellular location is the cytoplasm. It carries out the reaction L-glutamate + NH4(+) + ATP = L-glutamine + ADP + phosphate + H(+). In Phaseolus vulgaris (Kidney bean), this protein is Glutamine synthetase PR-1.